The sequence spans 185 residues: Ribosome-recycling factor (185 aa).

Belongs to the RRF family.

It is found in the cytoplasm. Responsible for the release of ribosomes from messenger RNA at the termination of protein biosynthesis. May increase the efficiency of translation by recycling ribosomes from one round of translation to another. The sequence is that of Ribosome-recycling factor from Pseudomonas syringae pv. tomato (strain ATCC BAA-871 / DC3000).